The primary structure comprises 81 residues: Relaxin-like protein AGF (81 aa).

Cystine bridges form between cysteine 14–cysteine 66, cysteine 26–cysteine 79, and cysteine 65–cysteine 70. Asparagine 37 carries N-linked (GlcNAc...) asparagine glycosylation.

This sequence belongs to the insulin family. Heterodimer of a B chain and an A chain linked by two disulfide bonds.

The protein localises to the secreted. In terms of biological role, uncertain. The chain is Relaxin-like protein AGF from Hypanus sabinus (Atlantic stingray).